The primary structure comprises 714 residues: DNA ligase (714 aa).

NAD(+) contacts are provided by residues 47 to 51 (DAEYD), 96 to 97 (SL), and Glu-128. The active-site N6-AMP-lysine intermediate is Lys-130. NAD(+)-binding residues include Arg-151, Glu-188, Lys-306, and Lys-330. Zn(2+)-binding residues include Cys-435, Cys-438, Cys-453, and Cys-459. The region spanning 637 to 714 (RRDTAVAGKT…TEDEWLALIS (78 aa)) is the BRCT domain.

This sequence belongs to the NAD-dependent DNA ligase family. LigA subfamily. The cofactor is Mg(2+). It depends on Mn(2+) as a cofactor.

It carries out the reaction NAD(+) + (deoxyribonucleotide)n-3'-hydroxyl + 5'-phospho-(deoxyribonucleotide)m = (deoxyribonucleotide)n+m + AMP + beta-nicotinamide D-nucleotide.. In terms of biological role, DNA ligase that catalyzes the formation of phosphodiester linkages between 5'-phosphoryl and 3'-hydroxyl groups in double-stranded DNA using NAD as a coenzyme and as the energy source for the reaction. It is essential for DNA replication and repair of damaged DNA. In Rhodopseudomonas palustris (strain HaA2), this protein is DNA ligase.